Reading from the N-terminus, the 58-residue chain is UPF0391 membrane protein ABO_0024 (58 aa).

2 helical membrane passes run 4–24 (WALTFLVVAIIAGVLGFGGIA) and 28–48 (ASIAKIIFFIFLALLVISLVV).

Belongs to the UPF0391 family.

Its subcellular location is the cell membrane. This is UPF0391 membrane protein ABO_0024 from Alcanivorax borkumensis (strain ATCC 700651 / DSM 11573 / NCIMB 13689 / SK2).